Reading from the N-terminus, the 455-residue chain is Nuclear distribution protein nudF (455 aa).

The region spanning 9 to 41 (QAEELHKSMIAYLVASDLPDTAAALRREVNLSE) is the LisH domain. The stretch at 61–88 (TSIARLQKKIMDLESRNATLQSELDNST) forms a coiled coil. WD repeat units lie at residues 113–154 (SHRD…RTLK), 156–196 (HTRA…KNIR), 200–239 (GHDHIVSAVRFIPSRNLLVSASRDNDMRIWDVTTGYCVKT), 242–281 (GHTDWVRDVSISFDGRFLFSTGQDMTARLWDISTVSNIEH), 287–347 (GHEN…LMTL), 349–388 (GHDSWVQALVFHPGGKYLLSVSDDKTLRCWDLNQQGKCVK), 392–438 (AHES…IQMR), and 440–455 (VVATGGWDQKLKIFAG). The segment at 408–431 (KNVPGGDGAAEGEGNDKNGAGSEN) is disordered.

The protein belongs to the WD repeat LIS1/nudF family. In terms of assembly, self-associates. Interacts with nudE and dynein.

The protein resides in the cytoplasm. The protein localises to the cytoskeleton. It localises to the spindle pole. Positively regulates the activity of the minus-end directed microtubule motor protein dynein. May enhance dynein-mediated microtubule sliding by targeting dynein to the microtubule plus end. Required for nuclear migration during vegetative growth as well as development. Required for retrograde early endosome (EE) transport from the hyphal tip. Required for localization of dynein to the mitotic spindle poles. Recruits additional proteins to the dynein complex at SPBs. In Aspergillus flavus (strain ATCC 200026 / FGSC A1120 / IAM 13836 / NRRL 3357 / JCM 12722 / SRRC 167), this protein is Nuclear distribution protein nudF.